Reading from the N-terminus, the 193-residue chain is Superoxide dismutase [Fe] (193 aa).

Fe cation contacts are provided by His-27, His-74, Asp-157, and His-161.

The protein belongs to the iron/manganese superoxide dismutase family. Homodimer. Fe cation is required as a cofactor.

It catalyses the reaction 2 superoxide + 2 H(+) = H2O2 + O2. Destroys superoxide anion radicals which are normally produced within the cells and which are toxic to biological systems. This chain is Superoxide dismutase [Fe] (sodB), found in Salmonella typhimurium (strain LT2 / SGSC1412 / ATCC 700720).